Consider the following 315-residue polypeptide: Tyrosine--tRNA ligase (315 aa).

Tyrosine 32 contributes to the L-tyrosine binding site. Positions proline 37–histidine 45 match the 'HIGH' region motif. L-tyrosine contacts are provided by tyrosine 152, glutamine 156, aspartate 159, and glutamine 174. The 'KMSKS' region motif lies at lysine 208–serine 212. Serine 211 is an ATP binding site.

It belongs to the class-I aminoacyl-tRNA synthetase family. TyrS type 3 subfamily. Homodimer.

It localises to the cytoplasm. The enzyme catalyses tRNA(Tyr) + L-tyrosine + ATP = L-tyrosyl-tRNA(Tyr) + AMP + diphosphate + H(+). Functionally, catalyzes the attachment of tyrosine to tRNA(Tyr) in a two-step reaction: tyrosine is first activated by ATP to form Tyr-AMP and then transferred to the acceptor end of tRNA(Tyr). This is Tyrosine--tRNA ligase from Methanoculleus marisnigri (strain ATCC 35101 / DSM 1498 / JR1).